A 956-amino-acid chain; its full sequence is Glutamate receptor ionotropic, kainate 4 (956 aa).

The signal sequence occupies residues 1–20; it reads MPRVSAPLVLLPAWLLMVAC. Residues 21–545 are Extracellular-facing; the sequence is SPHSLRIAAI…YFSSLDPFSP (525 aa). N158, N220, N272, N286, N323, N408, N415, and N479 each carry an N-linked (GlcNAc...) asparagine glycan. 3 residues coordinate L-glutamate: G500, T502, and R507. The chain crosses the membrane as a helical span at residues 546–566; the sequence is GVWLFMLLAYLAVSCVLFLVA. Over 567 to 623 the chain is Cytoplasmic; it reads RLTPYEWYSPHPCAQGRCNLLVNQYSLGNSLWFPVGGFMQQGSTIAPRALSTRCVSG. A helical membrane pass occupies residues 624-644; it reads VWWAFTLIIISSYTANLAAFL. The Extracellular portion of the chain corresponds to 645 to 804; it reads TVQRMEVPIE…HRAKGLGMEN (160 aa). L-glutamate contacts are provided by S674, S675, and E723. Residue N736 is glycosylated (N-linked (GlcNAc...) asparagine). The chain crosses the membrane as a helical span at residues 805–825; sequence IGGIFVVLICGLIVAIFMAML. Topologically, residues 826 to 956 are cytoplasmic; the sequence is EFLWTLRHSE…DKTTNSSEPE (131 aa). The segment at 931 to 956 is disordered; the sequence is LRARPSPARSEESLEWDKTTNSSEPE. Positions 939–948 are enriched in basic and acidic residues; the sequence is RSEESLEWDK.

The protein belongs to the glutamate-gated ion channel (TC 1.A.10.1) family. GRIK4 subfamily. In terms of assembly, homodimer. Can form functional heteromeric receptors with GRIK1, GRIK2 and GRIK3. Strong expression in hippocampal CA3 pyramidal cells. Low expression in hippocampal dentate granule cells, in layers II, V and VI of the cortex, and in cerebellar Purkinje cells. No expression in the striatum, reticular thalamus, hypothalamus or amygdaloid complex.

It is found in the cell membrane. It localises to the postsynaptic cell membrane. The protein localises to the presynaptic cell membrane. In terms of biological role, ionotropic glutamate receptor that functions as a cation-permeable ligand-gated ion channel, gated by L-glutamate and the glutamatergic agonist kainic acid. Cannot form functional channels on its own and shows channel activity only in heteromeric assembly with GRIK1, GRIK2 and GRIK3 subunits. The polypeptide is Glutamate receptor ionotropic, kainate 4 (Grik4) (Rattus norvegicus (Rat)).